The chain runs to 151 residues: 3-hydroxyacyl-[acyl-carrier-protein] dehydratase FabZ (151 aa).

His54 is an active-site residue.

This sequence belongs to the thioester dehydratase family. FabZ subfamily.

The protein resides in the cytoplasm. The enzyme catalyses a (3R)-hydroxyacyl-[ACP] = a (2E)-enoyl-[ACP] + H2O. Its function is as follows. Involved in unsaturated fatty acids biosynthesis. Catalyzes the dehydration of short chain beta-hydroxyacyl-ACPs and long chain saturated and unsaturated beta-hydroxyacyl-ACPs. This Klebsiella pneumoniae (strain 342) protein is 3-hydroxyacyl-[acyl-carrier-protein] dehydratase FabZ.